Here is an 806-residue protein sequence, read N- to C-terminus: Transitional endoplasmic reticulum ATPase (806 aa).

Ser-3 is modified (phosphoserine). Residues 247-253, Asn-348, His-384, and 521-526 each bind ATP; these read PGTGKTL and GCGKTL. Disordered regions lie at residues 708 to 727 and 768 to 806; these read RRERERQTNPSAMEVEEDDP and FGSFRFPSSNQGGSGPSQGSSGGGGGNVFNEDNDDDLYG. Residues 768-778 show a composition bias toward low complexity; sequence FGSFRFPSSNQ. Gly residues predominate over residues 779–794; the sequence is GGSGPSQGSSGGGGGN.

This sequence belongs to the AAA ATPase family. In terms of assembly, homohexamer.

It is found in the cytoplasm. The protein localises to the cytosol. It localises to the endoplasmic reticulum. The protein resides in the nucleus. It catalyses the reaction ATP + H2O = ADP + phosphate + H(+). In terms of biological role, necessary for the fragmentation of Golgi stacks during mitosis and for their reassembly after mitosis. Involved in the formation of the nuclear envelope, and of the transitional endoplasmic reticulum (tER). The transfer of membranes from the endoplasmic reticulum to the Golgi apparatus occurs via 50-70 nm transition vesicles which derive from part-rough, part-smooth transitional elements of the endoplasmic reticulum (tER). Vesicle budding from the tER is an ATP-dependent process. Also involved in DNA damage response: recruited to double-strand breaks (DSBs) sites and promotes the recruitment of tp53bp1 at DNA damage sites. Together with sprtn metalloprotease, involved in the repair of covalent DNA-protein cross-links (DPCs) during DNA synthesis. Involved in interstrand cross-link repair in response to replication stress by mediating unloading of the ubiquitinated CMG helicase complex. Enhances cell cycle progression and inhibits apoptosis at low temperatures. Essential for the maturation of ubiquitin-containing autophagosomes and the clearance of ubiquitinated protein by autophagy. Acts as a negative regulator of type I interferon production by promoting ubiquitination of RIGI. May play a role in the ubiquitin-dependent sorting of membrane proteins to lysosomes where they undergo degradation. May more particularly play a role in caveolins sorting in cells. By controlling the steady-state expression of the IGF1R receptor, indirectly regulates the insulin-like growth factor receptor signaling pathway. This is Transitional endoplasmic reticulum ATPase from Danio rerio (Zebrafish).